Here is a 423-residue protein sequence, read N- to C-terminus: Pentamidine resistance factor, mitochondrial (423 aa).

The helical transmembrane segment at 199–219 (PVFFTLVFIFEEVSVLIFTFF) threads the bilayer.

As to quaternary structure, interacts with COX18. This interaction may be essential for its insertion into mitochondrial inner membrane.

The protein resides in the mitochondrion inner membrane. Its function is as follows. Probably involved in mitochondrial export. Confers resistance to the anti-pneumocystis carinii drug pentamidine. May act by the removal of pentamidine, or its damage targets, from the matrix by an active-transport mechanism. The polypeptide is Pentamidine resistance factor, mitochondrial (PNT1) (Saccharomyces cerevisiae (strain ATCC 204508 / S288c) (Baker's yeast)).